The following is a 275-amino-acid chain: MARFALTIVRHGETRYNKEKLLQGQGIDEPLSEMGFKQADAAGRFLSNVRFTHVFSSDLIRAKQTACAIMRNNQLSEDIKIMYDPRLRERKYGDAEGRPLSELKVMAKKAGGQCPSYTPPGGETLEQVRACAKDFFEYLCQLVMAESSVKEKSELGASGMVGIMSTDLAPFVNHNKEPTIFGESRDVTLDASVLLVSHGAYMRNWIKYFVEDLQFTFPPELKKSRELSVSPNTGISHFIVTVGSGATRKPEIQCVCINLHGHLSDIDADTSHYQV.

His-11 acts as the Tele-phosphohistidine intermediate in catalysis. Glu-89 acts as the Proton donor/acceptor in catalysis.

It belongs to the phosphoglycerate mutase family.

The protein resides in the cytoplasm. The protein localises to the nucleus. Its subcellular location is the mitochondrion. It catalyses the reaction beta-D-fructose 2,6-bisphosphate + H2O = beta-D-fructose 6-phosphate + phosphate. Functionally, fructose-bisphosphatase hydrolyzing fructose-2,6-bisphosphate as well as fructose-1,6-bisphosphate. Acts as a negative regulator of glycolysis by lowering intracellular levels of fructose-2,6-bisphosphate in a p53/TP53-dependent manner, resulting in the pentose phosphate pathway (PPP) activation and NADPH production. Contributes to the generation of reduced glutathione to cause a decrease in intracellular reactive oxygen species (ROS) content, correlating with its ability to protect cells from oxidative or metabolic stress-induced cell death. May play a role in mitophagy inhibition. In Xenopus laevis (African clawed frog), this protein is Fructose-2,6-bisphosphatase TIGAR.